A 101-amino-acid chain; its full sequence is Small ribosomal subunit protein bS18c (101 aa).

It belongs to the bacterial ribosomal protein bS18 family. As to quaternary structure, part of the 30S ribosomal subunit.

It is found in the plastid. It localises to the chloroplast. In Aethionema cordifolium (Lebanon stonecress), this protein is Small ribosomal subunit protein bS18c.